The chain runs to 656 residues: Protein teflon (656 aa).

Residues 33 to 56 (LYCHFCRDLFTQLPEFLRHLQSNH) form a C2H2-type 1 zinc finger. A disordered region spans residues 80 to 131 (DKAHEDAQSAGHNSSSGDSRSLMNSEDSRAIDGSEENSDNSPVKPEQIGKQN). Positions 89–104 (AGHNSSSGDSRSLMNS) are enriched in polar residues. 2 consecutive C2H2-type zinc fingers follow at residues 606 to 628 (YFCK…LISH) and 632 to 655 (FQCT…RNAH).

This sequence belongs to the Teflon family.

The protein resides in the nucleus. The protein localises to the chromosome. In terms of biological role, specifically required in males for proper segregation of autosomal bivalents at meiosis I. Expression is required in the male germ line prior to spermatocyte stage S4. May have a role as a bridging molecule maintaining adhesion to hold autosome bivalents together via heterochromatic connections. The sequence is that of Protein teflon from Drosophila sechellia (Fruit fly).